The sequence spans 152 residues: MDKQLLSENNQLSSEEILGLLPHRFPFALVDRVIEHIPGHKAVALKNVTINEPQFQGHFPERPLMPGVLIVESMAQVGGIIVTQMPDLPKGLFVFAGINNVKFRRPVLPGDQLVITCELLSIKRQRFGKVKGEAHVDGKLVCSGELMFSLVD.

Residue His-58 is part of the active site.

The protein belongs to the thioester dehydratase family. FabZ subfamily.

The protein localises to the cytoplasm. The enzyme catalyses a (3R)-hydroxyacyl-[ACP] = a (2E)-enoyl-[ACP] + H2O. In terms of biological role, involved in unsaturated fatty acids biosynthesis. Catalyzes the dehydration of short chain beta-hydroxyacyl-ACPs and long chain saturated and unsaturated beta-hydroxyacyl-ACPs. The chain is 3-hydroxyacyl-[acyl-carrier-protein] dehydratase FabZ from Prochlorococcus marinus (strain MIT 9515).